A 398-amino-acid chain; its full sequence is 1-deoxy-D-xylulose 5-phosphate reductoisomerase (398 aa).

NADPH-binding residues include Thr10, Gly11, Ser12, Ile13, Asn38, and Asn124. Lys125 provides a ligand contact to 1-deoxy-D-xylulose 5-phosphate. Glu126 contacts NADPH. Asp150 is a binding site for Mn(2+). 4 residues coordinate 1-deoxy-D-xylulose 5-phosphate: Ser151, Glu152, Ser176, and His199. Residue Glu152 participates in Mn(2+) binding. An NADPH-binding site is contributed by Gly205. The 1-deoxy-D-xylulose 5-phosphate site is built by Ser212, Asn217, Lys218, and Glu221. Glu221 provides a ligand contact to Mn(2+).

This sequence belongs to the DXR family. Mg(2+) serves as cofactor. The cofactor is Mn(2+).

It carries out the reaction 2-C-methyl-D-erythritol 4-phosphate + NADP(+) = 1-deoxy-D-xylulose 5-phosphate + NADPH + H(+). It functions in the pathway isoprenoid biosynthesis; isopentenyl diphosphate biosynthesis via DXP pathway; isopentenyl diphosphate from 1-deoxy-D-xylulose 5-phosphate: step 1/6. Its function is as follows. Catalyzes the NADPH-dependent rearrangement and reduction of 1-deoxy-D-xylulose-5-phosphate (DXP) to 2-C-methyl-D-erythritol 4-phosphate (MEP). The polypeptide is 1-deoxy-D-xylulose 5-phosphate reductoisomerase (Rippkaea orientalis (strain PCC 8801 / RF-1) (Cyanothece sp. (strain PCC 8801))).